We begin with the raw amino-acid sequence, 341 residues long: MILLENVKKIYKAKSGDVTAVDNANLKIDKGEIFGVIGYSGAGKSSLIRLFNQLEKPTSGQITIANRVISAITGSELRKARQEIGMIFQHFNLLWSRTVRENIEFPLEIAGVDKAARRKRVDELIHLVGLEGRGDAYPSQLSGGQKQRVGIARALANNPQVLLCDEATSALDPETTDQILDLLLDINKRLGLTIVLITHEMHVIRKICNRVAVMEKGKIVETGPVLDVFRNPQQDITKRFVQQLTDSEDTNETIESLIEKYPDGKVVRLQFIGEAVERPVLQRLMQRSDIEVSILQGNIAQTNNGSYGSLVVHLNGEETAIQQAIEGIHQDQVELEVIAHG.

The 240-residue stretch at 2–241 folds into the ABC transporter domain; it reads ILLENVKKIY…PQQDITKRFV (240 aa). 38 to 45 contacts ATP; that stretch reads GYSGAGKS.

It belongs to the ABC transporter superfamily. Methionine importer (TC 3.A.1.24) family. In terms of assembly, the complex is composed of two ATP-binding proteins (MetN), two transmembrane proteins (MetI) and a solute-binding protein (MetQ).

The protein localises to the cell membrane. The catalysed reaction is L-methionine(out) + ATP + H2O = L-methionine(in) + ADP + phosphate + H(+). The enzyme catalyses D-methionine(out) + ATP + H2O = D-methionine(in) + ADP + phosphate + H(+). Functionally, part of the ABC transporter complex MetNIQ involved in methionine import. Responsible for energy coupling to the transport system. In Bacillus thuringiensis subsp. konkukian (strain 97-27), this protein is Methionine import ATP-binding protein MetN 2.